We begin with the raw amino-acid sequence, 601 residues long: uncharacterized protein (601 aa).

An N-terminal signal peptide occupies residues 1–24; the sequence is MKLSSLPSGLGLASLLGLISSATA.

The protein localises to the membrane. This is an uncharacterized protein from Schizosaccharomyces pombe (strain 972 / ATCC 24843) (Fission yeast).